The following is a 504-amino-acid chain: FAD-dependent monooxygenase nsrK (504 aa).

Arg-146 lines the FAD pocket. Arg-227 is an active-site residue. Asp-340 and Gly-353 together coordinate FAD.

The protein belongs to the paxM FAD-dependent monooxygenase family. The cofactor is FAD.

Its pathway is secondary metabolite biosynthesis. FAD-dependent monooxygenase; part of the gene cluster that mediates the biosynthesis of the tetrahydroxanthone dimer neosartorin, which exhibits antibacterial activity. The two different monomeric units appear to be synthesized by the same set of enzymes, among which the Baeyer-Villiger monooxygenase nsrF is the key enzyme for the divergence of the biosynthetic routes. The pathway begins with the synthesis of atrochrysone thioester by the polyketide synthase nsrB. The atrochrysone carboxyl ACP thioesterase nsrC then breaks the thioester bond and releases the atrochrysone carboxylic acid from AacuL. Atrochrysone carboxylic acid is decarboxylated by the decarboxylase nsrE, and oxidized by the anthrone oxygenase nsrD to yield emodin. Emodin is then reduced to emodin hydroquinone by the oxidoreductase nsrR. A-ring reduction by the short chain dehydrogenase nsrJ, dehydration by the scytalone dehydratase-like protein nsrI and probable spontaneous re-oxidation, results in overall deoxygenation to chrysophanol. The Baeyer-Villiger monooxygenase nsrF accepts chrysophanol as a substrate to insert one oxygen atom at two different positions to yield the precursors of both monomric units. NsrF is promiscuous/flexible in interacting with the 2 (non methylated and methylated) aromatic rings of chrysophanol, thus diverging the biosynthetic pathway at this point. After the hydrolysis of the lactones, methylesterification by the methyltransferase nsrG yields respectively moniliphenone and 2,2',6'-trihydroxy-4-methyl-6-methoxya-cyldiphenylmethanone. The next steps are the hydroxylation by the FAD-dependent monooxygenase nsrK, followed by isomerization by the monooxygenase nsrQ. The short chain dehydrogenase/reductase nsrO then catalyzes the C-5 ketoreduction to give the xanthone skeleton of blennolide C and 5-acetylblennolide A. The acetyltransferase nsrL has a strict substrate specificity and uses only blennolide A but not blennolide C to yield 5-acetylblennolide A as the single-acetylated product. In the final step of the biosynthesis, the heterodimerization of the 2 xanthones, blennolide C and 5-acetylblennolide A, is catalyzed by the cytochrome P450 monooxygenase nsrP. NsrP can utilize at least three different xanthones as its substrates to perform the dimerization reaction. The chain is FAD-dependent monooxygenase nsrK from Aspergillus novofumigatus (strain IBT 16806).